Reading from the N-terminus, the 347-residue chain is Aurora kinase A- and ninein-interacting protein (347 aa).

Residues 182–347 (QREAKRKREG…DSEGNRVIRH (166 aa)) are interaction with AURKA. Positions 273-347 (RDSWSQLFTE…DSEGNRVIRH (75 aa)) are interaction with RBBP8/CtIP. Residue Ser284 is modified to Phosphoserine. Residues 301 to 322 (VTNARNQGSGQFPDSPQAQGQD) show a composition bias toward polar residues. The interval 301-325 (VTNARNQGSGQFPDSPQAQGQDGPT) is disordered.

The protein belongs to the AUNIP family. Interacts (via C-terminus) with AURKA (via C-terminus). Interacts (via N-terminus) with NIN; this interaction blocks NIN phosphorylation by both AURKA and GSK3B. Identified in a complex with NIN and AURKA. Interacts with RBBP8/CtIP.

The protein resides in the nucleus. It localises to the chromosome. It is found in the cytoplasm. The protein localises to the cytoskeleton. Its subcellular location is the microtubule organizing center. The protein resides in the centrosome. It localises to the spindle pole. In terms of biological role, DNA-binding protein that accumulates at DNA double-strand breaks (DSBs) following DNA damage and promotes DNA resection and homologous recombination. Serves as a sensor of DNA damage: binds DNA with a strong preference for DNA substrates that mimic structures generated at stalled replication forks, and anchors RBBP8/CtIP to DSB sites to promote DNA end resection and ensuing homologous recombination repair. Inhibits non-homologous end joining (NHEJ). Required for the dynamic movement of AURKA at the centrosomes and spindle apparatus during the cell cycle. The polypeptide is Aurora kinase A- and ninein-interacting protein (Rattus norvegicus (Rat)).